A 998-amino-acid chain; its full sequence is Collagen alpha-1(I) chain (998 aa).

The disordered stretch occupies residues glycine 1–proline 998. Residues proline 18, proline 21, proline 24, proline 33, proline 48, proline 63, proline 69, proline 78, and proline 84 each carry the 4-hydroxyproline modification. A compositionally biased stretch (low complexity) spans proline 26–methionine 39. Residues asparagine 51–glutamate 65 are compositionally biased toward basic and acidic residues. Lysine 87 carries the 5-hydroxylysine; alternate modification. O-linked (Gal...) hydroxylysine; alternate glycosylation is present at lysine 87. Serine 93 is subject to Phosphoserine. The segment covering aspartate 101–leucine 115 has biased composition (low complexity). 4-hydroxyproline occurs at positions 116, 122, 143, 152, 155, 182, 185, 197, 203, 212, 218, 221, and 236. Low complexity predominate over residues proline 122–alanine 140. Over residues proline 142 to phenylalanine 154 the composition is skewed to pro residues. Positions alanine 188–proline 238 are enriched in low complexity. Position 239 is a 5-hydroxylysine (lysine 239). Proline 245, proline 248, proline 260, proline 269, proline 284, proline 290, proline 299, and proline 305 each carry 4-hydroxyproline. Gly residues predominate over residues glycine 294 to glycine 303. Lysine 314 is subject to 5-hydroxylysine. 4-hydroxyproline occurs at positions 323, 332, 338, 344, 353, 356, 365, 374, 380, 392, 401, 410, 413, 431, 449, 455, 461, 467, 473, 479, 491, 500, 511, 523, 526, 532, 538, and 547. Residues lysine 347 to proline 401 show a composition bias toward low complexity. The span at glutamine 443–glutamine 470 shows a compositional bias: low complexity. Positions asparagine 513 to glutamine 535 are enriched in low complexity. A 5-hydroxylysine modification is found at lysine 559. A 4-hydroxyproline mark is found at proline 565 and proline 580. Over residues threonine 592 to alanine 606 the composition is skewed to low complexity. Residue serine 595 is modified to Phosphoserine. A 4-hydroxyproline mark is found at proline 607, proline 613, proline 616, proline 625, proline 631, proline 649, proline 658, and proline 667. Residues alanine 619–alanine 646 are compositionally biased toward low complexity. Residues proline 648 to proline 660 are compositionally biased toward pro residues. Lysine 670 bears the 5-hydroxylysine mark. Residues serine 675–valine 691 are compositionally biased toward low complexity. Proline 679 and proline 685 each carry 4-hydroxyproline. A 3-hydroxyproline modification is found at proline 693. 4-hydroxyproline is present on residues proline 694, proline 703, proline 706, proline 727, proline 736, proline 744, proline 753, proline 771, proline 780, proline 783, proline 789, proline 804, proline 810, proline 816, proline 825, and proline 831. Low complexity predominate over residues glutamate 720–glutamate 729. Over residues lysine 741–alanine 762 the composition is skewed to low complexity. Residues proline 803–alanine 813 show a composition bias toward pro residues. A compositionally biased stretch (low complexity) spans proline 815–serine 830. Lysine 840 carries the 5-hydroxylysine modification. A compositionally biased stretch (pro residues) spans proline 848–valine 863. 4-hydroxyproline is present on residues proline 851, proline 854, and proline 857. The span at alanine 884–proline 898 shows a compositional bias: low complexity. Positions arginine 899 to isoleucine 913 are enriched in basic and acidic residues. The residue at position 902 (lysine 902) is a 5-hydroxylysine. Residue lysine 914 is modified to 5-hydroxylysine; alternate. The O-linked (Gal...) hydroxylysine; alternate glycan is linked to lysine 914. Proline 929, proline 932, proline 950, and proline 965 each carry 4-hydroxyproline. Low complexity predominate over residues proline 932 to proline 965. Position 970 is a 3-hydroxyproline (proline 970). The residue at position 971 (proline 971) is a 4-hydroxyproline. Residues valine 983 to proline 998 show a composition bias toward pro residues. Position 985 is a 3-hydroxyproline (proline 985). Position 986 is a 4-hydroxyproline (proline 986). 3-hydroxyproline is present on proline 988. Proline 989 bears the 4-hydroxyproline mark. Proline 991 is subject to 3-hydroxyproline. A 4-hydroxyproline mark is found at proline 992, proline 995, and proline 998.

It belongs to the fibrillar collagen family. In terms of assembly, trimers of one alpha 2(I) and two alpha 1(I) chains. Post-translationally, contains mostly 4-hydroxyproline. Proline residues at the third position of the tripeptide repeating unit (G-X-Y) are hydroxylated in some or all of the chains. Contains 3-hydroxyproline at a few sites. This modification occurs on the first proline residue in the sequence motif Gly-Pro-Hyp, where Hyp is 4-hydroxyproline. In terms of processing, lysine residues at the third position of the tripeptide repeating unit (G-X-Y) are 5-hydroxylated in some or all of the chains. Post-translationally, O-glycosylated on hydroxylated lysine residues. The O-linked glycan consists of a Glc-Gal disaccharide. Expressed in bones.

It localises to the secreted. The protein resides in the extracellular space. It is found in the extracellular matrix. Type I collagen is a member of group I collagen (fibrillar forming collagen). The sequence is that of Collagen alpha-1(I) chain from Glyptodon sp. (strain SLP-2019) (Giant armadillo).